We begin with the raw amino-acid sequence, 311 residues long: Heparan sulfate glucosamine 3-O-sulfotransferase 1 (311 aa).

Positions 1-20 (MTLLLLGAVLLVAQPQLVPS) are cleaved as a signal peptide. Asn-52 is a glycosylation site (N-linked (GlcNAc...) asparagine). 3'-phosphoadenylyl sulfate is bound by residues 68–72 (KGGTR), Arg-151, and Ser-159. N-linked (GlcNAc...) asparagine glycans are attached at residues Asn-196, Asn-246, and Asn-253. Position 259 (Tyr-259) interacts with 3'-phosphoadenylyl sulfate. Cys-260 and Cys-269 are disulfide-bonded. Residue 274–278 (KGRAH) participates in 3'-phosphoadenylyl sulfate binding.

This sequence belongs to the sulfotransferase 1 family.

Its subcellular location is the golgi apparatus lumen. It carries out the reaction alpha-D-glucosaminyl-[heparan sulfate](n) + 3'-phosphoadenylyl sulfate = 3-sulfo-alpha-D-glucosaminyl-[heparan sulfate](n) + adenosine 3',5'-bisphosphate + H(+). Functionally, sulfotransferase that utilizes 3'-phospho-5'-adenylyl sulfate (PAPS) to catalyze the transfer of a sulfo group to position 3 of glucosamine residues in heparan. Catalyzes the rate limiting step in the biosynthesis of heparan sulfate (HSact). This modification is a crucial step in the biosynthesis of anticoagulant heparan sulfate as it completes the structure of the antithrombin pentasaccharide binding site. In Rattus norvegicus (Rat), this protein is Heparan sulfate glucosamine 3-O-sulfotransferase 1 (Hs3st1).